A 430-amino-acid polypeptide reads, in one-letter code: Mucorpepsin (430 aa).

The first 22 residues, 1 to 22 (MLFSQITSAILLTAASLSLTTA), serve as a signal peptide directing secretion. The propeptide at 23–69 (RPVSKQSESKDKLLALPLTSVSRKFSQTKFGQQQLAEKLAGLKPFSE) is activation peptide. The 333-residue stretch at 89 to 421 (YAIPVSIGTP…DFGNNRIGFA (333 aa)) folds into the Peptidase A1 domain. Residue D107 is part of the active site. Residues C120 and C126 are joined by a disulfide bond. N148 and N257 each carry an N-linked (GlcNAc...) asparagine glycan. D306 is an active-site residue. A disulfide bridge connects residues C341 and C385.

Belongs to the peptidase A1 family.

The catalysed reaction is Hydrolysis of proteins, favoring hydrophobic residues at P1 and P1'. Clots milk. Does not accept Lys at P1, and hence does not activate trypsinogen.. This enzyme, capable of clotting milk is frequently used for cheese production. The sequence is that of Mucorpepsin from Rhizomucor miehei.